The primary structure comprises 116 residues: Large ribosomal subunit protein bL17 (116 aa).

It belongs to the bacterial ribosomal protein bL17 family. As to quaternary structure, part of the 50S ribosomal subunit. Contacts protein L32.

The protein is Large ribosomal subunit protein bL17 of Prochlorococcus marinus (strain MIT 9215).